Here is a 1320-residue protein sequence, read N- to C-terminus: CAP-Gly domain-containing linker protein 1 (1320 aa).

Residues 1 to 53 form a disordered region; that stretch reads MSMLKPSGLKAPTKILKPGSTALKTPAAAAAPLEKTVPSEKASGPPSSETQEE. Residues 21 to 35 are compositionally biased toward low complexity; the sequence is TALKTPAAAAAPLEK. Ser48 is modified (phosphoserine). Thr50 is modified (phosphothreonine). One can recognise a CAP-Gly 1 domain in the interval 78–120; it reads GETQFAPGQWAGIVLDEPIGKNDGSVAGVRYFQCEPLKGIFTR. Residues 97–101 form an important for tubulin binding region; it reads GKNDG. The residue at position 146 (Ser146) is a Phosphoserine. The span at 156-171 shows a compositional bias: polar residues; the sequence is VSSSPATPSNIPQKPS. The tract at residues 156-181 is disordered; that stretch reads VSSSPATPSNIPQKPSQPVAKETSAT. Thr181 carries the phosphothreonine modification. 4 positions are modified to phosphoserine: Ser194, Ser196, Ser199, and Ser203. The region spanning 231 to 273 is the CAP-Gly 2 domain; that stretch reads GETDFAKGEWCGVELDEPLGKNDGAVAGTRYFQCQPKYGLFAP. A compositionally biased stretch (low complexity) spans 301-331; sequence TTPASLKRSPSASSLSSMSSVASSVSSKPSR. A disordered region spans residues 301–338; sequence TTPASLKRSPSASSLSSMSSVASSVSSKPSRTGLLTET. The residue at position 309 (Ser309) is a Phosphoserine. Position 311 is a phosphoserine; by PKA (Ser311). Ser314 and Ser347 each carry phosphoserine. A disordered region spans residues 1089–1109; sequence SLPSNTLRESEYRKDADEEKA. Residues 1096 to 1109 show a composition bias toward basic and acidic residues; it reads RESEYRKDADEEKA. Ser1116 is modified (phosphoserine). A disordered region spans residues 1178-1201; it reads KRQLSSSSGNTDVQTEEDERAQES. Residues 1180–1190 are compositionally biased toward polar residues; the sequence is QLSSSSGNTDV. A Phosphoserine modification is found at Ser1246. Residues 1299–1316 form a CCHC-type zinc finger; the sequence is PYCEICEMFGHWATNCND.

As to quaternary structure, interacts with MTOR; phosphorylates and regulates CLIP1. Interacts (via CAP-Gly domains) with tubulin and TUBA1B. Interacts with SLAIN2. Interacts with MAPRE1 and MAPRE3. Interacts (via zinc finger) with DCTN1. Binds preferentially to tyrosinated microtubules, and only marginally to detyrosinated microtubules. In terms of processing, phosphorylated. Phosphorylation induces conformational changes by increasing the affinity of the N-terminus for C-terminus, resulting in inhibition of its function thus decreasing its binding to microtubules and DCTN1. Exhibits a folded, autoinhibited conformation when phosphorylated and an open conformation when dephosphorylated with increased binding affinity to microtubules and DCTN1. Phosphorylation regulates its recruitment to tyrosinated microtubules and the recruitment of vesicular cargo to microtubules in neurons. Phosphorylation by MTOR may positively regulate CLIP1 association with microtubules.

Its subcellular location is the cytoplasm. It is found in the cytoskeleton. It localises to the cytoplasmic vesicle membrane. The protein localises to the cell projection. The protein resides in the ruffle. Functionally, binds to the plus end of microtubules and regulates the dynamics of the microtubule cytoskeleton. Promotes microtubule growth and microtubule bundling. Links cytoplasmic vesicles to microtubules and thereby plays an important role in intracellular vesicle trafficking. Plays a role macropinocytosis and endosome trafficking. This is CAP-Gly domain-containing linker protein 1 (Clip1) from Rattus norvegicus (Rat).